The sequence spans 153 residues: RNA-binding protein 3 (153 aa).

The RRM domain maps to 6-84 (GKLFVGGLNF…RQIRVDHAGK (79 aa)). Omega-N-methylarginine is present on Arg-47. The interval 81–153 (HAGKSARGSR…GGNYRDNYDN (73 aa)) is disordered. The segment covering 89–112 (SRGGAFGGRGRSYSRGGGDQGYGS) has biased composition (gly residues). Arg-103 is subject to Asymmetric dimethylarginine; alternate. Arg-103 carries the post-translational modification Dimethylated arginine; alternate. At Arg-103 the chain carries Omega-N-methylarginine; alternate. Omega-N-methylarginine occurs at positions 118 and 128. Residues Ser-133 and Ser-143 each carry the phosphoserine modification. Tyr-151 carries the phosphotyrosine modification.

In terms of assembly, interacts with RPL4. Associates with the 60S ribosomal subunits in an RNA-independent manner. In terms of processing, arg-103 is dimethylated, probably to asymmetric dimethylarginine. Post-translationally, phosphorylated.

It is found in the nucleus. Its subcellular location is the cytoplasm. It localises to the cell projection. The protein resides in the dendrite. In terms of biological role, cold-inducible mRNA binding protein that enhances global protein synthesis at both physiological and mild hypothermic temperatures. Reduces the relative abundance of microRNAs, when overexpressed. Enhances phosphorylation of translation initiation factors and active polysome formation. The protein is RNA-binding protein 3 (Rbm3) of Mus musculus (Mouse).